Consider the following 262-residue polypeptide: 5'-nucleotidase SurE (262 aa).

A divalent metal cation-binding residues include Asp-8, Asp-9, Ser-39, and Asn-91.

Belongs to the SurE nucleotidase family. A divalent metal cation serves as cofactor.

It is found in the cytoplasm. The catalysed reaction is a ribonucleoside 5'-phosphate + H2O = a ribonucleoside + phosphate. Nucleotidase that shows phosphatase activity on nucleoside 5'-monophosphates. This chain is 5'-nucleotidase SurE, found in Geobacter sulfurreducens (strain ATCC 51573 / DSM 12127 / PCA).